A 542-amino-acid chain; its full sequence is CTP synthase (542 aa).

The interval Met-1–Ile-265 is amidoligase domain. Ser-13 provides a ligand contact to CTP. UTP is bound at residue Ser-13. Residues Ser-14 to Leu-19 and Asp-71 contribute to the ATP site. Residues Asp-71 and Glu-139 each contribute to the Mg(2+) site. CTP-binding positions include Asp-146–Glu-148, Lys-186–Gln-191, and Lys-222. UTP is bound by residues Lys-186 to Gln-191 and Lys-222. Residue Arg-238 to Val-240 coordinates ATP. Residues Ser-291 to Leu-541 form the Glutamine amidotransferase type-1 domain. Gly-353 contacts L-glutamine. Cys-380 acts as the Nucleophile; for glutamine hydrolysis in catalysis. L-glutamine contacts are provided by residues Phe-381–Gln-384, Glu-404, and Arg-469. Residues His-514 and Glu-516 contribute to the active site.

It belongs to the CTP synthase family. As to quaternary structure, homotetramer.

It carries out the reaction UTP + L-glutamine + ATP + H2O = CTP + L-glutamate + ADP + phosphate + 2 H(+). It catalyses the reaction L-glutamine + H2O = L-glutamate + NH4(+). The enzyme catalyses UTP + NH4(+) + ATP = CTP + ADP + phosphate + 2 H(+). Its pathway is pyrimidine metabolism; CTP biosynthesis via de novo pathway; CTP from UDP: step 2/2. Allosterically activated by GTP, when glutamine is the substrate; GTP has no effect on the reaction when ammonia is the substrate. The allosteric effector GTP functions by stabilizing the protein conformation that binds the tetrahedral intermediate(s) formed during glutamine hydrolysis. Inhibited by the product CTP, via allosteric rather than competitive inhibition. In terms of biological role, catalyzes the ATP-dependent amination of UTP to CTP with either L-glutamine or ammonia as the source of nitrogen. Regulates intracellular CTP levels through interactions with the four ribonucleotide triphosphates. In Methylobacterium nodulans (strain LMG 21967 / CNCM I-2342 / ORS 2060), this protein is CTP synthase.